The sequence spans 1982 residues: CASP8-associated protein 2 (1982 aa).

Position 2 is an N-acetylalanine (Ala-2). Position 20 is a phosphoserine (Ser-20). Over residues 159–191 (VKTKDLKSRSPHLDDCSKTDHRAKSDVSKDVHH) the composition is skewed to basic and acidic residues. Residues 159-552 (VKTKDLKSRS…ESGPNETKNK (394 aa)) form a disordered region. Residue Ser-194 is modified to Phosphoserine. Over residues 198–210 (LEKEGKPHSDKRS) the composition is skewed to basic and acidic residues. Over residues 225–240 (GVWSRSHYQVGEGSSN) the composition is skewed to polar residues. Residues 286–395 (GHPEKYGKGE…ERASLPHSKN (110 aa)) show a composition bias toward basic and acidic residues. Residues 396–405 (EITFSHNSSK) show a composition bias toward polar residues. Composition is skewed to basic and acidic residues over residues 406–423 (YHLE…DKSV), 444–455 (KNIDSKEVDAMH), and 463–524 (KAER…KGEV). Ser-567 is modified (phosphoserine). Residues 569-593 (AKKQPVSQDNQHKITDIPKSSGVCD) form a disordered region. Phosphoserine occurs at positions 658, 815, and 875. Disordered stretches follow at residues 875–1017 (SPPQ…DKVM), 1157–1188 (FGRD…DNSN), and 1251–1283 (ERSL…HATL). Residues 894 to 904 (SAHSTSKSQSD) are compositionally biased toward polar residues. 4 stretches are compositionally biased toward basic and acidic residues: residues 905–924 (LNKE…EADT), 936–965 (GEIR…DVRK), 999–1016 (KRPD…KDKV), and 1157–1170 (FGRD…EKTS). Ser-940 bears the Phosphoserine mark. Ser-1161 carries the phosphoserine modification. Composition is skewed to polar residues over residues 1171–1181 (KQNAQYSNSQK) and 1269–1281 (GSSI…SQHA). Residue Lys-1343 is modified to N6-acetyllysine. An SUMO interaction motif 1 (SIM); mediates the binding to polysumoylated substrates motif is present at residues 1683-1687 (YVDLT). An NCOA2-binding region spans residues 1709-1982 (DQLGCSGGNL…MKLFEKSKCR (274 aa)). Positions 1737–1741 (FIDLT) match the SUMO interaction motif 2 (SIM); mediates the binding to polysumoylated substrates motif. The SUMO interaction motif 3 (SIM); mediates the binding to polysumoylated substrates signature appears at 1794 to 1798 (YIDLT). A disordered region spans residues 1803 to 1909 (SSCEVKKDEL…IKDSSAALAT (107 aa)). Over residues 1851 to 1865 (KETDLTNKEKTKKPT) the composition is skewed to basic and acidic residues.

Self-associates. Component of the death-inducing signaling complex (DISC) with CASP8, FADD and FAS. Interacts with NCOA2 and NCOA3. Interacts with SRRT. Interacts with TRAF2. Interacts with NPAT. Interacts (via SIM domains) with SUMO1 and SUMO2. Interacts with SP100; may negatively regulate CASP8AP2 export from the nucleus to the cytoplasm.

It localises to the cytoplasm. Its subcellular location is the nucleus. The protein resides in the PML body. The protein localises to the mitochondrion. Functionally, participates in TNF-alpha-induced blockade of glucocorticoid receptor (GR) transactivation at the nuclear receptor coactivator level, upstream and independently of NF-kappa-B. Suppresses both NCOA2- and NCOA3-induced enhancement of GR transactivation. Involved in TNF-alpha-induced activation of NF-kappa-B via a TRAF2-dependent pathway. Acts as a downstream mediator for CASP8-induced activation of NF-kappa-B. Required for the activation of CASP8 in FAS-mediated apoptosis. Required for histone gene transcription and progression through S phase. The chain is CASP8-associated protein 2 from Homo sapiens (Human).